A 156-amino-acid polypeptide reads, in one-letter code: MSRKNRAPKRDVLPDPLYNSQLVTRLINRVMLDGKRGTAASIVYGAFEQIKEATGNDALEVFETAMENIMPVLEVRARRVGGSNYQVPVKVRPERRTTLGLRWLVTIARLRGEHTMQDRLAKEILDAANNTGAAVKKREDTHRMAEANRAFAHFRW.

The protein belongs to the universal ribosomal protein uS7 family. As to quaternary structure, part of the 30S ribosomal subunit. Contacts proteins S9 and S11.

In terms of biological role, one of the primary rRNA binding proteins, it binds directly to 16S rRNA where it nucleates assembly of the head domain of the 30S subunit. Is located at the subunit interface close to the decoding center, probably blocks exit of the E-site tRNA. This is Small ribosomal subunit protein uS7 from Streptococcus pneumoniae serotype 4 (strain ATCC BAA-334 / TIGR4).